The sequence spans 1155 residues: ATP-dependent helicase/deoxyribonuclease subunit B (1155 aa).

Positions 1–300 constitute a UvrD-like helicase ATP-binding domain; that stretch reads MSLRFIVGRA…AHLEKYYFRH (300 aa). 8–15 contacts ATP; sequence GRAGSGKS. Positions 280–590 constitute a UvrD-like helicase C-terminal domain; that stretch reads TPVRFQKDSA…VVGTLERSRN (311 aa). 4 residues coordinate [4Fe-4S] cluster: Cys-792, Cys-1111, Cys-1114, and Cys-1120.

It belongs to the helicase family. AddB/RexB type 1 subfamily. In terms of assembly, heterodimer of AddA and AddB. Mg(2+) is required as a cofactor. Requires [4Fe-4S] cluster as cofactor.

Its function is as follows. The heterodimer acts as both an ATP-dependent DNA helicase and an ATP-dependent, dual-direction single-stranded exonuclease. Recognizes the chi site generating a DNA molecule suitable for the initiation of homologous recombination. The AddB subunit has 5' -&gt; 3' nuclease activity but not helicase activity. This chain is ATP-dependent helicase/deoxyribonuclease subunit B, found in Desulforamulus reducens (strain ATCC BAA-1160 / DSM 100696 / MI-1) (Desulfotomaculum reducens).